Here is a 1866-residue protein sequence, read N- to C-terminus: MGLPEYEADSEALLSQLTIEFTPGMTVSSLLAQVTTNDFHSAIEFFAAEKAVDIEGVHYNAYMQQIRKNPSLLRISVVAYAFHVSDMVAETMSYDVYEFLYKHYALFISNLVTRTLRFKELLLFCKQQFLEKMQASIVWAPELEQYLQVEGDAVAQGVSQLLYKMVTWVPTFVRGAVDWSVDAILVSFRKHFEKMVQEYVPMAHRVCSWLSQLWDKIVQWISQASETMGWFLDGCRDLMTWGIATLATCSALSLVEKLLVAMGFLVEPFGLSGIFLRTGVVAAACYNYGTNSKGFAEMMALLSLAANCVSTVIVGGFFPGEKDNAQSSPVILLEGLAGQMQNFCETTLVSVGKTCTAVNAISTCCGNLKALAGRILGMLRDFIWKTLGFETRFLADASLLFGEDVDGWLKAISDLRDQFIAKSYCSQDEMMQILVLLEKGRQMRKSGLSKGGISPAIINLILKGINDLEQLNRSCSVQGVRGVRKMPFTIFFQGKSRTGKSLLMSQVTKDFQDHYGLGGETVYSRNPCDQYWSGYRRQPFVLMDDFAAVVTEPSAEAQMINLISSAPYPLNMAGLEEKGICFDSQFVFVSTNFLEVSPEAKVRDDEAFKNRRHVIVQVSNDPAKAYDAANFASNQIYTILAWKDGRYNTVCVIEDYDELVAYLLTRSQQHAEEQEKNLANMMKSATFESHFKSLVEVLELGSMISAGFDIIRPEKLPSEAKEKRVLYSIPYNGEYCNALIDDNYNVTCWFGECVGNPEQLSKYSEKMLLGAYEFLLCSESLNVVIQAHLKEMVCPHHYDKELNFIGKIGETYYHNQMVSNIGSMQKWHRAILFGIGVLLGKEKEKTWYQVQVANVKQALYDMYTKEIRDWPMPIKVTCGIVLAAIGGSAFWKVFQQLVGSGNGPVLMGVAAGAFSAEPQSRKPNRFDMQQYRYNNVPLKRRVWADAQMSLDQSSVAIMSKCRANLVFGGTNLQIVMVPGRRFLACKHFFTHIKTKLRVEIVMDGRRYYHQFDPANIYDIPDSELVLYSHPSLEDVSHSCWDLFCWDPDKELPSVFGADFLSCKYNKFGGFYEAQYADIKVRTKKECLTIQSGNYVNKVSRYLEYEAPTIPEDCGSLVIAHIGGKHKIVGVHVAGIQGKIGCASLLPPLEPIAQAQGAEEYFDFLPAEENVSSGVAMVAGLKQGVYIPLPTKTALVETPSEWHLDTPCDKVPSILVPTDPRIPAQHEGYDPAKSGVSKYSQPMSALDPELLGEVANDVLELWHDCAVDWDDFGEVSLEEALNGCEGVEYMERIPLATSEGFPHILSRNGKEKGKRRFVQGDDCVVSLIPGTTVAKAYEELEASAHRFVPALVGIECPKDEKLPMRKVFDKPKTRCFTILPMEYNLVVRRKFLNFVRFIMANRHRLSCQVGINPYSMEWSRLAARMKEKGNDVLCCDYSSFDGLLSKQVMDVIASMINELCGGEDQLKNARRNLLMACCSRLAICKNTVWRVECGIPSGFPMTVIVNSIFNEILIRYHYKKLMREQQAPELMVQSFDKLIGLVTYGDDNLISVNAVVTPYFDGKKLKQSLAQGGVTITDGKDKTSLELPFRRLEECDFLKRTFVQRSSTIWDAPEDKASLWSQLHYVNCNNCEKEVAYLTNVVNVLRELYMHSPREATEFRRKVLKKVSWITSGDLPTLAQLQEFYEYQRQQGGADNNDTCDLLTSVDLLGPPLSFEKEAMHGCKVSEEIVTKNLAYYDFKRKGEDEVVFLFNTLYPQSSLPDGCHSVTWSQGSGRGGLPTQSWMSYNISRKDSNINKIIRTAVSSKKRVIFCARDNMVPVNIVALLCAVRNKLMPTAVSNATLVKVMENAKAFKFLPEEFNFAFSDV.

The SF3 helicase domain maps to 462–633; the sequence is LKGINDLEQL…KAYDAANFAS (172 aa). 494-501 is an ATP binding site; the sequence is GKSRTGKS. Residues 897–917 form a helical membrane-spanning segment; it reads LVGSGNGPVLMGVAAGAFSAE. An O-(5'-phospho-RNA)-serine modification is found at Ser-920. The region spanning 945-1150 is the Peptidase C3 domain; that stretch reads DAQMSLDQSS…CASLLPPLEP (206 aa). Catalysis depends on for picornain 3C-like protease activity residues His-987, Glu-1023, and Cys-1113. A RdRp catalytic domain is found at 1429 to 1559; sequence NDVLCCDYSS…SVNAVVTPYF (131 aa).

Post-translationally, specific enzymatic cleavages by picornain 3C-like protease in vivo yield mature proteins. Picornain 3C-like protease is autocatalytically processed. In terms of processing, uridylylated by the polymerase and is covalently linked to the 5'-end of genomic RNA. This uridylylated form acts as a nucleotide-peptide primer for the polymerase.

Its subcellular location is the host membrane. The protein localises to the host cytoplasm. It localises to the host perinuclear region. The protein resides in the host endoplasmic reticulum. The catalysed reaction is RNA(n) + a ribonucleoside 5'-triphosphate = RNA(n+1) + diphosphate. Functionally, thiol protease that cleaves the RNA1 and RNA2 polyproteins. In terms of biological role, plays a role in RNA replication. It is covalently linked to the 5'terminus of both viral single-stranded RNA1 and RNA2 molecules. Down-regulates the RNA1 polyprotein processing and enhances trans-cleavage of RNA2 polyproteins. The protease cofactor and the putative helicase seem to target the replication complexes to ER membranes. Their physical association causes the membrane rearrangement of host ER that may result in formation of the small membranous vesicles that are the site of viral RNA synthesis. Its function is as follows. The protease cofactor and the putative helicase seem to target the replication complexes to ER membranes. Their physical association causes the membrane rearrangement of host ER that may result in formation of the small membranous vesicles that are the site of viral RNA synthesis. Functionally, replicates the viral genome. This chain is RNA1 polyprotein, found in Cajanus cajan (Pigeon pea).